Reading from the N-terminus, the 114-residue chain is Large ribosomal subunit protein bL20 (114 aa).

The protein belongs to the bacterial ribosomal protein bL20 family.

Its function is as follows. Binds directly to 23S ribosomal RNA and is necessary for the in vitro assembly process of the 50S ribosomal subunit. It is not involved in the protein synthesizing functions of that subunit. The protein is Large ribosomal subunit protein bL20 of Anaeromyxobacter dehalogenans (strain 2CP-1 / ATCC BAA-258).